The primary structure comprises 194 residues: Inosine triphosphate pyrophosphatase (194 aa).

10–15 (TSSKKK) serves as a coordination point for ITP. Residue glutamate 37 coordinates Mg(2+). ITP is bound by residues lysine 49, 65–66 (DV), lysine 82, 142–145 (FGWD), lysine 166, and 171–172 (HR).

Belongs to the HAM1 NTPase family. As to quaternary structure, homodimer. The cofactor is Mg(2+). Mn(2+) is required as a cofactor.

It localises to the cytoplasm. It catalyses the reaction ITP + H2O = IMP + diphosphate + H(+). The catalysed reaction is dITP + H2O = dIMP + diphosphate + H(+). The enzyme catalyses XTP + H2O = XMP + diphosphate + H(+). Its function is as follows. Pyrophosphatase that hydrolyzes non-canonical purine nucleotides such as inosine triphosphate (ITP), deoxyinosine triphosphate (dITP) or xanthosine 5'-triphosphate (XTP) to their respective monophosphate derivatives. The enzyme does not distinguish between the deoxy- and ribose forms. Probably excludes non-canonical purines from RNA and DNA precursor pools, thus preventing their incorporation into RNA and DNA and avoiding chromosomal lesions. The polypeptide is Inosine triphosphate pyrophosphatase (Giardia intestinalis (strain ATCC 50803 / WB clone C6) (Giardia lamblia)).